Here is a 660-residue protein sequence, read N- to C-terminus: Long chain acyl-CoA synthetase 1 (660 aa).

ATP is bound at residue 225-236; the sequence is IMYTSGTSGDPK. The fatty acid-binding stretch occupies residues 492 to 516; it reads DGWFHTGDIGEILPNGVLKIIDRKK.

Belongs to the ATP-dependent AMP-binding enzyme family. Mg(2+) serves as cofactor. In terms of tissue distribution, epidermal-specific expression along the entire stem. In cauline leaves, was expressed over the entire leaf surface, most strongly in trichomes and guard cells, but not in mesophyll cells. In flowers, the expression was detected in the stigma and filaments of the stamens, and in the carpel was expressed specifically in ovaries. In roots, was expressed in primary and lateral roots, but not in the root tips.

The protein localises to the endoplasmic reticulum. It catalyses the reaction a long-chain fatty acid + ATP + CoA = a long-chain fatty acyl-CoA + AMP + diphosphate. The protein operates within lipid metabolism; fatty acid metabolism. Functionally, activation of long-chain fatty acids for both synthesis of cellular lipids, and degradation via beta-oxidation. Acts in both the wax and cutin pathways. Preferentially uses palmitate, palmitoleate, linoleate and eicosenoate. Seems to have a specific activity against very long-chain fatty acid (VLCFA) class with acids longer than 24 carbons (C(24)). The protein is Long chain acyl-CoA synthetase 1 (LACS1) of Arabidopsis thaliana (Mouse-ear cress).